A 467-amino-acid polypeptide reads, in one-letter code: Chromosomal replication initiator protein DnaA (467 aa).

The tract at residues 1 to 90 (MSLSLWQQCL…KPVTQTPQAA (90 aa)) is domain I, interacts with DnaA modulators. Residues 91 to 130 (VTSNVAAPAQVAQTQPQRAAPSTRSGWDNVPAPAEPTYRS) are domain II. The segment covering 98–111 (PAQVAQTQPQRAAP) has biased composition (low complexity). Residues 98–119 (PAQVAQTQPQRAAPSTRSGWDN) form a disordered region. A domain III, AAA+ region region spans residues 131–347 (NVNVKHTFDN…GALNRVIANA (217 aa)). Residues G175, G177, K178, and T179 each coordinate ATP. The segment at 348–467 (NFTGRAITID…FSNLIRTLSS (120 aa)) is domain IV, binds dsDNA.

The protein belongs to the DnaA family. Oligomerizes as a right-handed, spiral filament on DNA at oriC.

Its subcellular location is the cytoplasm. Functionally, plays an essential role in the initiation and regulation of chromosomal replication. ATP-DnaA binds to the origin of replication (oriC) to initiate formation of the DNA replication initiation complex once per cell cycle. Binds the DnaA box (a 9 base pair repeat at the origin) and separates the double-stranded (ds)DNA. Forms a right-handed helical filament on oriC DNA; dsDNA binds to the exterior of the filament while single-stranded (ss)DNA is stabiized in the filament's interior. The ATP-DnaA-oriC complex binds and stabilizes one strand of the AT-rich DNA unwinding element (DUE), permitting loading of DNA polymerase. After initiation quickly degrades to an ADP-DnaA complex that is not apt for DNA replication. Binds acidic phospholipids. This Shigella sonnei (strain Ss046) protein is Chromosomal replication initiator protein DnaA.